The sequence spans 2412 residues: Genome polyprotein 1 (2412 aa).

Residues 1 to 23 (MEQTLAQAVSRRGKTNTPMAEER) are disordered. One can recognise a Helicase ATP-binding domain in the interval 474-632 (AMADANNCWS…AARKYPLHVE (159 aa)). 487–494 (GHTGSGKS) contributes to the ATP binding site. One can recognise a Helicase C-terminal domain in the interval 647-813 (GGGDLLDISK…NVPFYMNETF (167 aa)). Tyr-1234 carries the O-(5'-phospho-RNA)-tyrosine modification. A Peptidase C4 domain is found at 1359–1574 (ISFGASTGIL…CGYSSHNALF (216 aa)). Residues His-1404, Asp-1440, and Cys-1507 each act as for nuclear inclusion protein A activity in the active site. One can recognise a RdRp catalytic domain in the interval 1858–1982 (WLHGSGDGSR…AISPQFDEEF (125 aa)). The segment at 2178–2202 (PTEDDGKLKTPSGARIPSSAADGNW) is disordered.

Belongs to the bymoviruses polyprotein 1 family. VPg is uridylylated by the polymerase and is covalently attached to the 5'-end of the genomic RNA. This uridylylated form acts as a nucleotide-peptide primer for the polymerase. In terms of processing, the viral RNA1 of bymoviruses is expressed as a single polyprotein which undergoes post-translational proteolytic processing by the main proteinase NIa-pro resulting in the production of at least eight individual proteins.

The protein resides in the host cytoplasmic vesicle. The protein localises to the virion. The enzyme catalyses RNA(n) + a ribonucleoside 5'-triphosphate = RNA(n+1) + diphosphate. The catalysed reaction is Hydrolyzes glutaminyl bonds, and activity is further restricted by preferences for the amino acids in P6 - P1' that vary with the species of potyvirus, e.g. Glu-Xaa-Xaa-Tyr-Xaa-Gln-|-(Ser or Gly) for the enzyme from tobacco etch virus. The natural substrate is the viral polyprotein, but other proteins and oligopeptides containing the appropriate consensus sequence are also cleaved.. Indispensable for virus replication. In terms of biological role, mediates the cap-independent, EIF4E-dependent translation of viral genomic RNAs. Binds to the cap-binding site of host EIF4E and thus interferes with the host EIF4E-dependent mRNA export and translation. VPg-RNA directly binds EIF4E and is a template for transcription. Also forms trimeric complexes with EIF4E-EIF4G, which are templates for translation. Its function is as follows. Has RNA-binding and proteolytic activities. Functionally, an RNA-dependent RNA polymerase that plays an essential role in the virus replication. This chain is Genome polyprotein 1, found in Hordeum vulgare (Barley).